Consider the following 203-residue polypeptide: ATP-dependent Clp protease proteolytic subunit (203 aa).

Residue S107 is the Nucleophile of the active site. H132 is a catalytic residue.

The protein belongs to the peptidase S14 family. Fourteen ClpP subunits assemble into 2 heptameric rings which stack back to back to give a disk-like structure with a central cavity, resembling the structure of eukaryotic proteasomes.

Its subcellular location is the cytoplasm. The catalysed reaction is Hydrolysis of proteins to small peptides in the presence of ATP and magnesium. alpha-casein is the usual test substrate. In the absence of ATP, only oligopeptides shorter than five residues are hydrolyzed (such as succinyl-Leu-Tyr-|-NHMec, and Leu-Tyr-Leu-|-Tyr-Trp, in which cleavage of the -Tyr-|-Leu- and -Tyr-|-Trp bonds also occurs).. Cleaves peptides in various proteins in a process that requires ATP hydrolysis. Has a chymotrypsin-like activity. Plays a major role in the degradation of misfolded proteins. In Shewanella sediminis (strain HAW-EB3), this protein is ATP-dependent Clp protease proteolytic subunit.